We begin with the raw amino-acid sequence, 547 residues long: Sodium-coupled neutral amino acid transporter 4 (547 aa).

A disordered region spans residues 1–34 (MDPMELNNVSIEPDGDSCSGDSIQDSYTGMENSD). Residues 1–104 (MDPMELNNVS…GLSYAMANTG (104 aa)) are Extracellular-facing. Residues 19 to 31 (SGDSIQDSYTGME) show a composition bias toward polar residues. Ser-49 bears the Phosphoserine mark. A helical transmembrane segment spans residues 105–125 (IILFIIMLLTVAILSLYSVHL). Residues 126–151 (LLKTAKEGGSLIYEKLGEKAFGWPGK) lie on the Cytoplasmic side of the membrane. A helical membrane pass occupies residues 152 to 172 (IGAFISITMQNIGAMSSYLFI). The Extracellular portion of the chain corresponds to 173 to 195 (IKYELPEVIRAFMGLEENTGEWY). A helical transmembrane segment spans residues 196 to 216 (LNGNYLVLFVSVGIILPLSLL). At 217-220 (KNLG) the chain is on the cytoplasmic side. Residues 221-241 (YLGYTSGFSLSCMVFFVSVVI) form a helical membrane-spanning segment. Residues 242 to 332 (YKKFQIPCPL…PKYFVFNSRT (91 aa)) lie on the Extracellular side of the membrane. A disulfide bond links Cys-249 and Cys-321. 3 N-linked (GlcNAc...) asparagine glycosylation sites follow: Asn-260, Asn-264, and Asn-276. The helical transmembrane segment at 333–353 (AYAIPILAFAFVCHPEVLPIY) threads the bilayer. The Cytoplasmic segment spans residues 354–369 (SELKDRSRRKMQTVSN). Residues 370–390 (ISISGMLVMYLLAALFGYLSF) traverse the membrane as a helical segment. Over 391–411 (YGDVEDELLHAYSKVYTFDTA) the chain is Extracellular. The chain crosses the membrane as a helical span at residues 412–432 (LLMVRLAVLVAVTLTVPIVLF). At 433-453 (PIRTSVITLLFPRKPFSWLKH) the chain is on the cytoplasmic side. A helical transmembrane segment spans residues 454 to 474 (FGIAAIIIALNNILVILVPTI). Over 475-476 (KY) the chain is Extracellular. The chain crosses the membrane as a helical span at residues 477 to 497 (IFGFIGASSATMLIFILPAAF). Residues 498-514 (YLKLVKKEPLRSPQKIG) lie on the Cytoplasmic side of the membrane. The chain crosses the membrane as a helical span at residues 515–535 (ALVFLVTGIIFMMGSMALIIL). The Extracellular portion of the chain corresponds to 536–547 (DWIYNPPNPNHH).

Belongs to the amino acid/polyamine transporter 2 family. In terms of processing, the disulfide bond plays an important role in substrate transport, but has no effect on trafficking to the cell surface. In terms of tissue distribution, detected in liver, in hepatocytes surrounding the central vein. Not detected in heart, kidney, brain, lung, small intestine, spleen and thymus. Highly expressed in placenta.

The protein localises to the cell membrane. The protein resides in the cell projection. Its subcellular location is the microvillus membrane. The enzyme catalyses L-alanine(in) + Na(+)(in) = L-alanine(out) + Na(+)(out). The catalysed reaction is L-methionine(in) + Na(+)(in) = L-methionine(out) + Na(+)(out). It catalyses the reaction L-asparagine(in) + Na(+)(in) = L-asparagine(out) + Na(+)(out). It carries out the reaction L-threonine(in) + Na(+)(in) = L-threonine(out) + Na(+)(out). The enzyme catalyses L-serine(in) + Na(+)(in) = L-serine(out) + Na(+)(out). The catalysed reaction is glycine(in) + Na(+)(in) = glycine(out) + Na(+)(out). It catalyses the reaction L-glutamine(in) + Na(+)(in) = L-glutamine(out) + Na(+)(out). It carries out the reaction L-histidine(in) + Na(+)(in) = L-histidine(out) + Na(+)(out). The enzyme catalyses L-cysteine(in) + Na(+)(in) = L-cysteine(out) + Na(+)(out). The catalysed reaction is L-proline(in) + Na(+)(in) = L-proline(out) + Na(+)(out). In terms of biological role, symporter that cotransports neutral amino acids and sodium ions from the extraccellular to the intracellular side of the cell membrane. The transport is electrogenic, pH dependent and partially tolerates substitution of Na(+) by Li(+). Preferentially transports smaller amino acids, such as glycine, L-alanine, L-serine, L-asparagine and L-threonine, followed by L-cysteine, L-histidine, L-proline and L-glutamine and L-methionine. The chain is Sodium-coupled neutral amino acid transporter 4 from Mus musculus (Mouse).